The chain runs to 310 residues: Malate dehydrogenase (310 aa).

NAD(+) contacts are provided by residues glycine 7–glycine 12 and aspartate 32. Positions 81 and 87 each coordinate substrate. NAD(+)-binding positions include asparagine 94 and valine 117–asparagine 119. Residues asparagine 119 and arginine 150 each contribute to the substrate site. The Proton acceptor role is filled by histidine 174.

Belongs to the LDH/MDH superfamily. MDH type 3 family. In terms of assembly, homotetramer; arranged as a dimer of dimers.

The enzyme catalyses (S)-malate + NAD(+) = oxaloacetate + NADH + H(+). In terms of biological role, catalyzes the reversible oxidation of malate to oxaloacetate. This is Malate dehydrogenase from Chlorobaculum parvum (strain DSM 263 / NCIMB 8327) (Chlorobium vibrioforme subsp. thiosulfatophilum).